We begin with the raw amino-acid sequence, 409 residues long: Pyrophosphate--fructose 6-phosphate 1-phosphotransferase (409 aa).

Position 14 (glycine 14) interacts with diphosphate. Aspartate 123 is a Mg(2+) binding site. Substrate-binding positions include 151 to 153 (TVD), 196 to 198 (MGR), glutamate 268, and 325 to 328 (YFAR). Aspartate 153 (proton acceptor) is an active-site residue.

Belongs to the phosphofructokinase type A (PFKA) family. PPi-dependent PFK group II subfamily. Clade 'P' sub-subfamily. Homodimer. The cofactor is Mg(2+).

It localises to the cytoplasm. It catalyses the reaction beta-D-fructose 6-phosphate + diphosphate = beta-D-fructose 1,6-bisphosphate + phosphate + H(+). Its pathway is carbohydrate degradation; glycolysis; D-glyceraldehyde 3-phosphate and glycerone phosphate from D-glucose: step 3/4. Its activity is regulated as follows. Non-allosteric. Catalyzes the phosphorylation of D-fructose 6-phosphate, the first committing step of glycolysis. Uses inorganic phosphate (PPi) as phosphoryl donor instead of ATP like common ATP-dependent phosphofructokinases (ATP-PFKs), which renders the reaction reversible, and can thus function both in glycolysis and gluconeogenesis. Consistently, PPi-PFK can replace the enzymes of both the forward (ATP-PFK) and reverse (fructose-bisphosphatase (FBPase)) reactions. This Methylomonas methanica protein is Pyrophosphate--fructose 6-phosphate 1-phosphotransferase.